The following is a 193-amino-acid chain: Probable nicotinate-nucleotide adenylyltransferase (193 aa).

This sequence belongs to the NadD family.

It catalyses the reaction nicotinate beta-D-ribonucleotide + ATP + H(+) = deamido-NAD(+) + diphosphate. It participates in cofactor biosynthesis; NAD(+) biosynthesis; deamido-NAD(+) from nicotinate D-ribonucleotide: step 1/1. Functionally, catalyzes the reversible adenylation of nicotinate mononucleotide (NaMN) to nicotinic acid adenine dinucleotide (NaAD). In Fusobacterium nucleatum subsp. nucleatum (strain ATCC 25586 / DSM 15643 / BCRC 10681 / CIP 101130 / JCM 8532 / KCTC 2640 / LMG 13131 / VPI 4355), this protein is Probable nicotinate-nucleotide adenylyltransferase.